A 95-amino-acid chain; its full sequence is Large ribosomal subunit protein bL25 (95 aa).

Belongs to the bacterial ribosomal protein bL25 family. In terms of assembly, part of the 50S ribosomal subunit; part of the 5S rRNA/L5/L18/L25 subcomplex. Contacts the 5S rRNA. Binds to the 5S rRNA independently of L5 and L18.

Its function is as follows. This is one of the proteins that binds to the 5S RNA in the ribosome where it forms part of the central protuberance. The chain is Large ribosomal subunit protein bL25 from Shewanella frigidimarina (strain NCIMB 400).